The primary structure comprises 110 residues: uncharacterized protein (110 aa).

Residues 16-46 (ELDKLRECEERLSVIEKQKQSSKQESEETYI) are a coiled coil. The span at 85–96 (EEKDKKCQRKPE) shows a compositional bias: basic and acidic residues. The disordered stretch occupies residues 85 to 110 (EEKDKKCQRKPEAPSTPAVTIRSKRQ).

This is an uncharacterized protein from Bacillus subtilis (strain 168).